A 365-amino-acid chain; its full sequence is 2-aminoethylphosphonate--pyruvate transaminase (365 aa).

K194 is modified (N6-(pyridoxal phosphate)lysine).

This sequence belongs to the class-V pyridoxal-phosphate-dependent aminotransferase family. PhnW subfamily. As to quaternary structure, homodimer. Pyridoxal 5'-phosphate is required as a cofactor.

It carries out the reaction (2-aminoethyl)phosphonate + pyruvate = phosphonoacetaldehyde + L-alanine. Functionally, involved in phosphonate degradation. This Bacillus cereus (strain G9842) protein is 2-aminoethylphosphonate--pyruvate transaminase.